Reading from the N-terminus, the 65-residue chain is Large ribosomal subunit protein bL33m (65 aa).

The protein belongs to the bacterial ribosomal protein bL33 family. Component of the mitochondrial ribosome large subunit (39S) which comprises a 16S rRNA and about 50 distinct proteins.

It localises to the mitochondrion. The sequence is that of Large ribosomal subunit protein bL33m (mRpL33) from Anopheles gambiae (African malaria mosquito).